A 585-amino-acid chain; its full sequence is MAPMSIADLVAALPAEDTWGPATPSDNMLDGVPYAPFSKGDKLGRMADWTGDGKDRDRGGRQAYNRNYRDQQVYGAGTSSLFNIQVAEDESSFSVVDNTRTSTKRTFARGGGTVFRGRGQRGVGQRGGRAGFQRVGAGRGQGGDRYYDNRSARGNRGRRFGWKDYDKPQRTREPSVNVRPDWTMLEEVDFNRLSKLNLEAPEGEDLDSYGFLYYYDRSYDKAPVKNAERKLQALERAAYNVTTSQDPVIQELAEKNEATVFATSDILSMLMCAPRSVYSWDIVIVHQGDKIYFDKREGASIDLVTVNENAADAPMETTDSSGKQESINTPSALALEATFINHNFALQTVVESEESKVTFSHPNPFYNAAEETEPLASKGYKYRRFDLSLQGDEEPLNMIVRTEVDAVMKNPVGGEDQQLIVKALNEFDSKAPGSGGALDWRSKLWSQRGAVVATEMKNNSIKLARWTTQAILAKADAMKLGFISRANPRSATSHVILGVVGYKPREFAAQMNLNLGNGWGIVRTIVDRIRSLDAEEEEDKVKKYVLIKDPNRPVIRLYSVPPNTFEEDDEAAEEQEEKAEEESEE.

Over residues 43–60 the composition is skewed to basic and acidic residues; the sequence is LGRMADWTGDGKDRDRGG. Disordered regions lie at residues 43–62 and 109–152; these read LGRM…GGRQ and RGGG…NRSA. Residues 109 to 130 are compositionally biased toward gly residues; it reads RGGGTVFRGRGQRGVGQRGGRA. Positions 300–314 are RNA gate; it reads SIDLVTVNENAADAP. Residues 560–585 form a disordered region; it reads VPPNTFEEDDEAAEEQEEKAEEESEE. Over residues 565–585 the composition is skewed to acidic residues; the sequence is FEEDDEAAEEQEEKAEEESEE.

The protein belongs to the eIF-3 subunit D family. As to quaternary structure, component of the eukaryotic translation initiation factor 3 (eIF-3) complex.

It is found in the cytoplasm. Functionally, mRNA cap-binding component of the eukaryotic translation initiation factor 3 (eIF-3) complex, which is involved in protein synthesis of a specialized repertoire of mRNAs and, together with other initiation factors, stimulates binding of mRNA and methionyl-tRNAi to the 40S ribosome. The eIF-3 complex specifically targets and initiates translation of a subset of mRNAs involved in cell proliferation. In the eIF-3 complex, eif3d specifically recognizes and binds the 7-methylguanosine cap of a subset of mRNAs. In Neosartorya fischeri (strain ATCC 1020 / DSM 3700 / CBS 544.65 / FGSC A1164 / JCM 1740 / NRRL 181 / WB 181) (Aspergillus fischerianus), this protein is Eukaryotic translation initiation factor 3 subunit D.